Consider the following 154-residue polypeptide: 6,7-dimethyl-8-ribityllumazine synthase (154 aa).

5-amino-6-(D-ribitylamino)uracil contacts are provided by residues phenylalanine 21, 55 to 57 (AFE), and 79 to 81 (CVI). 84-85 (AT) is a (2S)-2-hydroxy-3-oxobutyl phosphate binding site. Histidine 87 serves as the catalytic Proton donor. Residue phenylalanine 111 participates in 5-amino-6-(D-ribitylamino)uracil binding. Arginine 125 contacts (2S)-2-hydroxy-3-oxobutyl phosphate.

This sequence belongs to the DMRL synthase family. As to quaternary structure, forms an icosahedral capsid composed of 60 subunits, arranged as a dodecamer of pentamers.

It carries out the reaction (2S)-2-hydroxy-3-oxobutyl phosphate + 5-amino-6-(D-ribitylamino)uracil = 6,7-dimethyl-8-(1-D-ribityl)lumazine + phosphate + 2 H2O + H(+). Its pathway is cofactor biosynthesis; riboflavin biosynthesis; riboflavin from 2-hydroxy-3-oxobutyl phosphate and 5-amino-6-(D-ribitylamino)uracil: step 1/2. Functionally, catalyzes the formation of 6,7-dimethyl-8-ribityllumazine by condensation of 5-amino-6-(D-ribitylamino)uracil with 3,4-dihydroxy-2-butanone 4-phosphate. This is the penultimate step in the biosynthesis of riboflavin. The chain is 6,7-dimethyl-8-ribityllumazine synthase from Macrococcus caseolyticus (strain JCSC5402) (Macrococcoides caseolyticum).